The chain runs to 203 residues: ATP-dependent Clp protease proteolytic subunit (203 aa).

The Nucleophile role is filled by Ser-98. His-123 is a catalytic residue.

The protein belongs to the peptidase S14 family. Fourteen ClpP subunits assemble into 2 heptameric rings which stack back to back to give a disk-like structure with a central cavity, resembling the structure of eukaryotic proteasomes.

The protein localises to the cytoplasm. It catalyses the reaction Hydrolysis of proteins to small peptides in the presence of ATP and magnesium. alpha-casein is the usual test substrate. In the absence of ATP, only oligopeptides shorter than five residues are hydrolyzed (such as succinyl-Leu-Tyr-|-NHMec, and Leu-Tyr-Leu-|-Tyr-Trp, in which cleavage of the -Tyr-|-Leu- and -Tyr-|-Trp bonds also occurs).. Cleaves peptides in various proteins in a process that requires ATP hydrolysis. Has a chymotrypsin-like activity. Plays a major role in the degradation of misfolded proteins. This Desulfotalea psychrophila (strain LSv54 / DSM 12343) protein is ATP-dependent Clp protease proteolytic subunit.